A 514-amino-acid chain; its full sequence is Histidine ammonia-lyase (514 aa).

The segment at residues 146 to 148 (ASG) is a cross-link (5-imidazolinone (Ala-Gly)). The residue at position 147 (S147) is a 2,3-didehydroalanine (Ser).

The protein belongs to the PAL/histidase family. Contains an active site 4-methylidene-imidazol-5-one (MIO), which is formed autocatalytically by cyclization and dehydration of residues Ala-Ser-Gly.

The protein resides in the cytoplasm. It carries out the reaction L-histidine = trans-urocanate + NH4(+). It functions in the pathway amino-acid degradation; L-histidine degradation into L-glutamate; N-formimidoyl-L-glutamate from L-histidine: step 1/3. In Clostridium tetani (strain Massachusetts / E88), this protein is Histidine ammonia-lyase.